The chain runs to 678 residues: Serine/threonine-protein kinase PLK (678 aa).

The Protein kinase domain occupies 22–309 (YRPGKLLGKG…VKECLDHSWL (288 aa)). Residues 28-36 (LGKGGFAYV) and K51 each bind ATP. D145 acts as the Proton acceptor in catalysis. 2 positions are modified to phosphothreonine; by autocatalysis: T179 and T183. 2 POLO box domains span residues 435–516 (YIMS…YLEN) and 563–644 (FLKK…IIKA). The segment at 658-678 (KDSTKKSASGSSTRQLGQGGE) is disordered. The span at 663-678 (KSASGSSTRQLGQGGE) shows a compositional bias: polar residues.

The protein belongs to the protein kinase superfamily. Ser/Thr protein kinase family. CDC5/Polo subfamily. In terms of assembly, interacts with Kin-13. Post-translationally, autophosphorylated. Autophosphorylation is critical for its function in cell growth, cytokinesis and formation of flagella.

It is found in the cell projection. It localises to the cilium. Its subcellular location is the flagellum. The protein localises to the cytoplasm. The protein resides in the cytoskeleton. It is found in the flagellum basal body. It localises to the flagellum axoneme. Its subcellular location is the spindle. The protein localises to the membrane. The catalysed reaction is L-seryl-[protein] + ATP = O-phospho-L-seryl-[protein] + ADP + H(+). The enzyme catalyses L-threonyl-[protein] + ATP = O-phospho-L-threonyl-[protein] + ADP + H(+). With respect to regulation, inhibited by GW843286X (GW), an ATP-competitive inhibitor. Inhibition leads to reduced growth, increased number of cells with more than four nuclei, increased number of cells with condensed nuclei, cell cycle arrest at G2/M or G1/S phase depending on the treatment time with GW, and increased length of membrane-bound portions of the caudal and anterior flagella. Involved in cell cycle. Involved in cell division. Involved in cytokinesis. Involved in flagella biogenesis and in regulation of flagella length in interphase. Involved in formation of median bodies during interphase. Phosphorylates Kin-13 in vitro. Likely regulates microtubule (MT) depolymerizing activity of Kin-13. The chain is Serine/threonine-protein kinase PLK from Giardia intestinalis (strain ATCC 50803 / WB clone C6) (Giardia lamblia).